A 345-amino-acid polypeptide reads, in one-letter code: Ketol-acid reductoisomerase (NADP(+)) (345 aa).

Residues 2 to 182 form the KARI N-terminal Rossmann domain; it reads AKVYHDSSAD…GTTRAGVLET (181 aa). Residues 25–28, R48, S51, S53, and 83–86 contribute to the NADP(+) site; these read YGSQ and DTEQ. H108 is a catalytic residue. G134 is a binding site for NADP(+). The region spanning 183-328 is the KARI C-terminal knotted domain; it reads TFKEETETDL…AQLRDMMTFL (146 aa). 4 residues coordinate Mg(2+): D191, E195, E227, and E231. Residue S252 participates in substrate binding.

Belongs to the ketol-acid reductoisomerase family. The cofactor is Mg(2+).

It carries out the reaction (2R)-2,3-dihydroxy-3-methylbutanoate + NADP(+) = (2S)-2-acetolactate + NADPH + H(+). It catalyses the reaction (2R,3R)-2,3-dihydroxy-3-methylpentanoate + NADP(+) = (S)-2-ethyl-2-hydroxy-3-oxobutanoate + NADPH + H(+). It functions in the pathway amino-acid biosynthesis; L-isoleucine biosynthesis; L-isoleucine from 2-oxobutanoate: step 2/4. It participates in amino-acid biosynthesis; L-valine biosynthesis; L-valine from pyruvate: step 2/4. Involved in the biosynthesis of branched-chain amino acids (BCAA). Catalyzes an alkyl-migration followed by a ketol-acid reduction of (S)-2-acetolactate (S2AL) to yield (R)-2,3-dihydroxy-isovalerate. In the isomerase reaction, S2AL is rearranged via a Mg-dependent methyl migration to produce 3-hydroxy-3-methyl-2-ketobutyrate (HMKB). In the reductase reaction, this 2-ketoacid undergoes a metal-dependent reduction by NADPH to yield (R)-2,3-dihydroxy-isovalerate. The sequence is that of Ketol-acid reductoisomerase (NADP(+)) from Koribacter versatilis (strain Ellin345).